A 347-amino-acid chain; its full sequence is MARAWVCLAGAAFFLSCLVLHSRFCGSLVSRTFSFHVSWRMEDPLFRLDLGWPKNSEYFTGATFCVAVDSLNGLVYVAQRGDNIPKVLVFSEDGYFLRAWNYTVDTPHGMFVSGTPFEQSVWITDVGSGPYGHTVKKYNSLGDLVQVLGTPGKKGTGLNPLQFDNPAELYVDDTGEMYIVDGDGGLNNRLVKLSQDFMILWLRGENGTGPAKFNIPHSVTLDAVGRVWVADRGNKRLQVFDKDTGEWLGAWDNCFTEEGPSAVRFTPDGKYLIVAQLNLSRLSVLLAPPSGSIGDCSVVSTIQLADQVLPHLLEVDRKTGAVYVAEIGAKQIQKYIPWHSRTPAFGA.

The first 22 residues, 1–22, serve as a signal peptide directing secretion; sequence MARAWVCLAGAAFFLSCLVLHS. Residues 47–93 form an NHL 1 repeat; the sequence is RLDLGWPKNSEYFTGATFCVAVDSLNGLVYVAQRGDNIPKVLVFSED. The N-linked (GlcNAc...) asparagine glycan is linked to Asn101. 2 NHL repeats span residues 150 to 196 and 200 to 243; these read TPGK…LSQD and LWLR…FDKD. Residues Asn206 and Asn278 are each glycosylated (N-linked (GlcNAc...) asparagine). The stretch at 294 to 338 is one NHL 4 repeat; that stretch reads GDCSVVSTIQLADQVLPHLLEVDRKTGAVYVAEIGAKQIQKYIPW.

The chain is NHL repeat-containing protein 3 (Nhlrc3) from Mus musculus (Mouse).